The sequence spans 467 residues: Fumarate hydratase class II (467 aa).

Residues 98 to 100 (SGT), Arg-126, 129 to 132 (HPND), 139 to 141 (SSN), and Thr-187 each bind substrate. Residue His-188 is the Proton donor/acceptor of the active site. Ser-318 is a catalytic residue. Substrate contacts are provided by residues Ser-319 and 324 to 326 (KVN).

The protein belongs to the class-II fumarase/aspartase family. Fumarase subfamily. In terms of assembly, homotetramer.

It localises to the cytoplasm. The enzyme catalyses (S)-malate = fumarate + H2O. Its pathway is carbohydrate metabolism; tricarboxylic acid cycle; (S)-malate from fumarate: step 1/1. Functionally, involved in the TCA cycle. Catalyzes the stereospecific interconversion of fumarate to L-malate. This Escherichia coli O6:H1 (strain CFT073 / ATCC 700928 / UPEC) protein is Fumarate hydratase class II.